Consider the following 178-residue polypeptide: Cytochrome b6-f complex iron-sulfur subunit (178 aa).

The helical transmembrane segment at 20 to 42 (LLTFGSVTGVALGALYPVANYFI) threads the bilayer. Residues 65-161 (ASGWLSSHPE…VSVENDNVFV (97 aa)) enclose the Rieske domain. The [2Fe-2S] cluster site is built by Cys107, His109, Cys125, and His128. A disulfide bridge links Cys112 with Cys127.

This sequence belongs to the Rieske iron-sulfur protein family. In terms of assembly, the 4 large subunits of the cytochrome b6-f complex are cytochrome b6, subunit IV (17 kDa polypeptide, PetD), cytochrome f and the Rieske protein, while the 4 small subunits are PetG, PetL, PetM and PetN. The complex functions as a dimer. The cofactor is [2Fe-2S] cluster.

Its subcellular location is the cellular thylakoid membrane. The enzyme catalyses 2 oxidized [plastocyanin] + a plastoquinol + 2 H(+)(in) = 2 reduced [plastocyanin] + a plastoquinone + 4 H(+)(out). Its function is as follows. Component of the cytochrome b6-f complex, which mediates electron transfer between photosystem II (PSII) and photosystem I (PSI), cyclic electron flow around PSI, and state transitions. The protein is Cytochrome b6-f complex iron-sulfur subunit of Synechococcus sp. (strain CC9605).